Here is a 448-residue protein sequence, read N- to C-terminus: Portal protein (448 aa).

The interval Met1–Lys25 is disordered.

Belongs to the P23virus portal protein family. Homododecamer. Interacts with the capsid protein. Interacts with the terminase large subunit; this interaction allows the packaging of viral DNA.

It localises to the virion. Its function is as follows. Forms the portal vertex of the capsid. This portal plays critical roles in head assembly, genome packaging, neck/tail attachment, and genome ejection. The portal protein multimerizes as a single ring-shaped homododecamer arranged around a central channel. Forms the portal vertex of the capsid. This portal plays critical roles in head assembly, genome packaging, neck/tail attachment, and genome ejection. This Thermus thermophilus (Thermus thermophilus phage P23-45) protein is Portal protein.